The primary structure comprises 276 residues: Prohibitin 1 (276 aa).

This sequence belongs to the prohibitin family.

In terms of biological role, required for larval metabolism or for the progression of the larva into a pupa. This chain is Prohibitin 1, found in Drosophila melanogaster (Fruit fly).